The sequence spans 188 residues: Glandular kallikrein-3, submandibular (188 aa).

Residues 1 to 185 (NYHVLLGQNN…FTSWIKEVMK (185 aa)) enclose the Peptidase S1 domain. N-linked (GlcNAc...) asparagine glycosylation is found at Asn-10 and Asn-36. Asp-47 functions as the Charge relay system in the catalytic mechanism. 3 cysteine pairs are disulfide-bonded: Cys-79–Cys-146, Cys-111–Cys-125, and Cys-136–Cys-161. The Charge relay system role is filled by Ser-140.

This sequence belongs to the peptidase S1 family. Kallikrein subfamily.

It catalyses the reaction Preferential cleavage of Arg-|-Xaa bonds in small molecule substrates. Highly selective action to release kallidin (lysyl-bradykinin) from kininogen involves hydrolysis of Met-|-Xaa or Leu-|-Xaa.. Its function is as follows. Glandular kallikreins cleave Met-Lys and Arg-Ser bonds in kininogen to release Lys-bradykinin. This chain is Glandular kallikrein-3, submandibular (Klk3), found in Rattus norvegicus (Rat).